Here is a 265-residue protein sequence, read N- to C-terminus: H-2 class II histocompatibility antigen, A-Q beta chain (265 aa).

Residues 1–27 (MALQIPSLLLSAAVVVLMVLSSPRTEG) form the signal peptide. The beta-1 stretch occupies residues 28–122 (GNSERHFVAQ…VETHTSLRRL (95 aa)). Over 28 to 227 (GNSERHFVAQ…AQSESARSKM (200 aa)) the chain is Extracellular. Intrachain disulfides connect Cys42-Cys106 and Cys145-Cys201. A glycan (N-linked (GlcNAc...) asparagine) is linked at Asn46. Residues 123–217 (EQPNVAISLS…LKSPITVEWR (95 aa)) are beta-2. The 89-residue stretch at 125-213 (PNVAISLSRT…EHPSLKSPIT (89 aa)) folds into the Ig-like C1-type domain. The connecting peptide stretch occupies residues 218–227 (AQSESARSKM). The helical transmembrane segment at 228–247 (LSGIGGCVLGVIFLGLGLFI) threads the bilayer. The Cytoplasmic segment spans residues 248–265 (RHRSQKGPRGPPPAGLLQ).

The protein belongs to the MHC class II family. Ubiquitinated in immature dendritic cells leading to down-regulation of MHC class II.

Its subcellular location is the membrane. This chain is H-2 class II histocompatibility antigen, A-Q beta chain (H2-Ab1), found in Mus musculus (Mouse).